The chain runs to 303 residues: ATP synthase gamma chain (303 aa).

Belongs to the ATPase gamma chain family. F-type ATPases have 2 components, CF(1) - the catalytic core - and CF(0) - the membrane proton channel. CF(1) has five subunits: alpha(3), beta(3), gamma(1), delta(1), epsilon(1). CF(0) has three main subunits: a, b and c.

The protein localises to the cell inner membrane. Its function is as follows. Produces ATP from ADP in the presence of a proton gradient across the membrane. The gamma chain is believed to be important in regulating ATPase activity and the flow of protons through the CF(0) complex. The protein is ATP synthase gamma chain of Elusimicrobium minutum (strain Pei191).